A 23-amino-acid polypeptide reads, in one-letter code: Protein YqfH (23 aa).

The protein is Protein YqfH of Escherichia coli (strain K12).